The following is a 309-amino-acid chain: tRNA dimethylallyltransferase (309 aa).

Position 9 to 16 (9 to 16 (GPTAIGKT)) interacts with ATP. 11–16 (TAIGKT) contacts substrate. 2 interaction with substrate tRNA regions span residues 34–37 (DSRQ) and 164–168 (QRMMR).

Belongs to the IPP transferase family. As to quaternary structure, monomer. It depends on Mg(2+) as a cofactor.

It catalyses the reaction adenosine(37) in tRNA + dimethylallyl diphosphate = N(6)-dimethylallyladenosine(37) in tRNA + diphosphate. Catalyzes the transfer of a dimethylallyl group onto the adenine at position 37 in tRNAs that read codons beginning with uridine, leading to the formation of N6-(dimethylallyl)adenosine (i(6)A). The protein is tRNA dimethylallyltransferase of Flavobacterium johnsoniae (strain ATCC 17061 / DSM 2064 / JCM 8514 / BCRC 14874 / CCUG 350202 / NBRC 14942 / NCIMB 11054 / UW101) (Cytophaga johnsonae).